The following is a 239-amino-acid chain: DnaA regulatory inactivator Hda (239 aa).

This sequence belongs to the DnaA family. HdA subfamily. As to quaternary structure, the active form seems to be an ADP-bound monomer. Forms the RIDA complex (regulatory inactivation of DnaA) of ATP-DnaA, ADP-Hda and the DNA-loaded beta sliding clamp (dnaN).

Functionally, mediates the interaction of DNA replication initiator protein DnaA with DNA polymerase subunit beta sliding clamp (dnaN). Stimulates hydrolysis of ATP-DnaA to ADP-DnaA, rendering DnaA inactive for reinitiation, a process called regulatory inhibition of DnaA or RIDA. This chain is DnaA regulatory inactivator Hda, found in Yersinia enterocolitica serotype O:8 / biotype 1B (strain NCTC 13174 / 8081).